The primary structure comprises 83 residues: Small ribosomal subunit protein eS21 (83 aa).

This sequence belongs to the eukaryotic ribosomal protein eS21 family. In terms of assembly, component of the 40S small ribosomal subunit.

The protein resides in the cytoplasm. It localises to the cytosol. Its subcellular location is the rough endoplasmic reticulum. Its function is as follows. Component of the small ribosomal subunit. The ribosome is a large ribonucleoprotein complex responsible for the synthesis of proteins in the cell. The sequence is that of Small ribosomal subunit protein eS21 (rps21) from Xenopus laevis (African clawed frog).